Reading from the N-terminus, the 151-residue chain is Protein A151R (151 aa).

This sequence belongs to the asfivirus A151R family. As to quaternary structure, monomer. Homodimer. Interacts with protein B119L. Interacts with membrane protein E248R. Zn(2+) serves as cofactor.

Its function is as follows. May participate in a redox cascade for the formation of disulfide bonds in viral proteins. The chain is Protein A151R from Ornithodoros (relapsing fever ticks).